A 258-amino-acid chain; its full sequence is 6-carboxyhexanoate--CoA ligase (258 aa).

The protein belongs to the BioW family. As to quaternary structure, homodimer. Mg(2+) is required as a cofactor.

It carries out the reaction heptanedioate + ATP + CoA = 6-carboxyhexanoyl-CoA + AMP + diphosphate. Its pathway is metabolic intermediate metabolism; pimeloyl-CoA biosynthesis; pimeloyl-CoA from pimelate: step 1/1. Functionally, catalyzes the transformation of pimelate into pimeloyl-CoA with concomitant hydrolysis of ATP to AMP. In Bacillus subtilis (strain BSn5), this protein is 6-carboxyhexanoate--CoA ligase.